A 169-amino-acid chain; its full sequence is Short form salivary protein D7R3 (169 aa).

The first 21 residues, 1-21 (MFGKLLPCAILVWCLFSLGQA), serve as a signal peptide directing secretion. Intrachain disulfides connect cysteine 30/cysteine 62, cysteine 43/cysteine 168, and cysteine 101/cysteine 120. Residues glutamate 31 and arginine 46 each coordinate noradrenaline. Serotonin is bound at residue glutamate 31. Positions 59, 118, 135, and 138 each coordinate serotonin. Tyrosine 118, aspartate 135, and glutamate 138 together coordinate histamine. Noradrenaline is bound by residues aspartate 135 and glutamate 138.

The protein belongs to the PBP/GOBP family. In terms of tissue distribution, female saliva (at protein level). Female salivary gland. Low-level expression in female carcass without salivary glands. Not detected in male tissues.

Its subcellular location is the secreted. Its function is as follows. Modulates blood feeding of female mosquitoes on vertebrate species by binding and sequestering different mediators involved in the host response. Binds serotonin, noradrenaline, histamine and adrenaline. Inhibits histamine-, serotonin- and noradrenaline-induced smooth muscle contraction. Exhibits vasodilating activity. The sequence is that of Short form salivary protein D7R3 from Anopheles gambiae (African malaria mosquito).